The chain runs to 685 residues: Polyphosphate kinase (685 aa).

ATP is bound at residue N45. Mg(2+) is bound by residues R372 and R402. The PLD phosphodiesterase 1 domain occupies 427-461; sequence PGLKIHAKLFLISRKEGDDVVRYAHIGTGNFNEKT. Catalysis depends on H432, which acts as the Phosphohistidine intermediate. Residues Y465, R561, and H589 each contribute to the ATP site. The PLD phosphodiesterase 2 domain occupies 584–614; sequence DRYLEHDRIYIFDNAGDKQVYLSSADWMTRN.

Belongs to the polyphosphate kinase 1 (PPK1) family. The cofactor is Mg(2+). In terms of processing, an intermediate of this reaction is the autophosphorylated ppk in which a phosphate is covalently linked to a histidine residue through a N-P bond.

The catalysed reaction is [phosphate](n) + ATP = [phosphate](n+1) + ADP. In terms of biological role, catalyzes the reversible transfer of the terminal phosphate of ATP to form a long-chain polyphosphate (polyP). This is Polyphosphate kinase from Klebsiella pneumoniae.